A 293-amino-acid polypeptide reads, in one-letter code: Aminodeoxychorismate lyase (293 aa).

Position 146 is an N6-(pyridoxal phosphate)lysine (K146).

The protein belongs to the class-IV pyridoxal-phosphate-dependent aminotransferase family. In terms of assembly, homodimer. Pyridoxal 5'-phosphate is required as a cofactor.

The catalysed reaction is 4-amino-4-deoxychorismate = 4-aminobenzoate + pyruvate + H(+). It functions in the pathway cofactor biosynthesis; tetrahydrofolate biosynthesis; 4-aminobenzoate from chorismate: step 2/2. Involved in the biosynthesis of p-aminobenzoate (PABA), a precursor of tetrahydrofolate. Converts 4-amino-4-deoxychorismate into 4-aminobenzoate (PABA) and pyruvate. In Bacillus subtilis (strain 168), this protein is Aminodeoxychorismate lyase.